A 374-amino-acid polypeptide reads, in one-letter code: Pre-B-cell leukemia transcription factor 4 (374 aa).

Positions 14 to 209 (PRRLDTSDVL…VMTLRSRLLD (196 aa)) constitute a PBC domain. The interval 21-100 (DVLQQIMAIT…EGVCRPEKRG (80 aa)) is PBC-A. The segment at 103 to 209 (GAVARAGTAT…VMTLRSRLLD (107 aa)) is PBC-B. Positions 210–272 (ARRKRRNFSK…NKRIRYKKNM (63 aa)) form a DNA-binding region, homeobox; TALE-type. The disordered stretch occupies residues 333–374 (QPPPGGGCLQSQAQGSWQGATPQPATASPAGDPGSINSSTSN). Polar residues predominate over residues 341–358 (LQSQAQGSWQGATPQPAT).

It belongs to the TALE/PBX homeobox family.

It localises to the nucleus. This chain is Pre-B-cell leukemia transcription factor 4 (PBX4), found in Homo sapiens (Human).